We begin with the raw amino-acid sequence, 502 residues long: MVVRDYNTELTYIERISTNSFRIKKGFQPNMNVEGIFYANSRLEKLMFDELRNSCRPGMTGGFLPGVKQIANVAALPGIVGRSVGLPDIHSGYGFAIGNMAAFDMSDPTSIVSPGGVGFDINCGVRLLRTNLFEKDVKPVQEQLAQSLFDHIPVGVGSKGIIPMNAHDLEEALEMGMDWSLREGYVWAEDKEHCEEYGRMLTADPSKVSMRAKKRGLPQLGTLGAGNHYAEIQVVEEIYDKYAASKMGIEELGQICVMIHSGSRGFGHQVATDALVEMEKAMKRDKIETNDRQLACARINSVEGQNYLKAMSAAANFAWVNRSSMTFLTRQAFAKQFNTTPDDLDMHVIYDVSHNVAKIEEHIVDGRPKQLLVHRKGSTRAFPPHHPLIPVDYQLTGQPVLVGGSMGTCSFVLTGTEKGMAETFGSTCHGAGRSLSRAKSRRNLDYRTSCGIWRRREFPSGWRRRSWSRRKHPIRTRTCVMWCRPVTTWASVPSASSCGRLR.

Aspartate 120, cysteine 123, histidine 228, histidine 260, and histidine 354 together coordinate Mn(2+). 227-231 (NHYAE) lines the GMP pocket. Residues 354 to 355 (HN), 403 to 406 (GGSM), serine 410, and 429 to 432 (HGAG) contribute to the GMP site. The GMP-histidine intermediate role is filled by histidine 429.

The protein belongs to the RtcB family. In terms of assembly, catalytic component of the tRNA-splicing ligase complex. Mn(2+) serves as cofactor.

It catalyses the reaction a 3'-end 3'-phospho-ribonucleotide-RNA + a 5'-end dephospho-ribonucleoside-RNA + GTP = a ribonucleotidyl-ribonucleotide-RNA + GMP + diphosphate. It carries out the reaction a 3'-end 2',3'-cyclophospho-ribonucleotide-RNA + a 5'-end dephospho-ribonucleoside-RNA + GTP + H2O = a ribonucleotidyl-ribonucleotide-RNA + GMP + diphosphate + H(+). Its function is as follows. Catalytic subunit of the tRNA-splicing ligase complex that acts by directly joining spliced tRNA halves to mature-sized tRNAs by incorporating the precursor-derived splice junction phosphate into the mature tRNA as a canonical 3',5'-phosphodiester. May act as an RNA ligase with broad substrate specificity, and may function toward other RNAs. The polypeptide is RNA-splicing ligase RtcB homolog 2 (Culex quinquefasciatus (Southern house mosquito)).